The following is a 20-amino-acid chain: Juvenile hormone-binding protein (20 aa).

The protein resides in the secreted. Prevents juvenile hormone from being hydrolyzed by general esterases by combining with it specifically. This chain is Juvenile hormone-binding protein (JHBP), found in Bombyx mori (Silk moth).